We begin with the raw amino-acid sequence, 488 residues long: E3 ubiquitin-protein ligase TRIM39 (488 aa).

Residues 29 to 70 (CSVCLEYLKEPVIIECGHNFCKACITRWWEDLERDFPCPVCR) form an RING-type zinc finger. A B box-type zinc finger spans residues 102 to 143 (RDESLCSQHHEPLSLFCYEDQEAVCLICAISHTHRAHTVVPM). Zn(2+) contacts are provided by cysteine 107, histidine 110, cysteine 129, and histidine 135. Residues 181-250 (ELKRLVESRR…AHLAAEVEGK (70 aa)) are a coiled coil. 2 interaction with CDKN1A regions span residues 268–307 (KCEK…QLIA) and 359–488 (TSGR…TDWE). Residues 289-484 (SHFPRQYFAL…NAAPLTIRPP (196 aa)) form the B30.2/SPRY domain.

It belongs to the TRIM/RBCC family. As to quaternary structure, interacts with MOAP1. Interacts with CDKN1A. Post-translationally, autoubiquitinated.

It is found in the cytoplasm. Its subcellular location is the cytosol. It localises to the mitochondrion. The protein localises to the nucleus. The catalysed reaction is S-ubiquitinyl-[E2 ubiquitin-conjugating enzyme]-L-cysteine + [acceptor protein]-L-lysine = [E2 ubiquitin-conjugating enzyme]-L-cysteine + N(6)-ubiquitinyl-[acceptor protein]-L-lysine.. It functions in the pathway protein modification; protein ubiquitination. Its function is as follows. E3 ubiquitin-protein ligase. May facilitate apoptosis by inhibiting APC/C-Cdh1-mediated poly-ubiquitination and subsequent proteasome-mediated degradation of the pro-apoptotic protein MOAP1. Regulates the G1/S transition of the cell cycle and DNA damage-induced G2 arrest by stabilizing CDKN1A/p21. Positively regulates CDKN1A/p21 stability by competing with DTL for CDKN1A/p21 binding, therefore disrupting DCX(DTL) E3 ubiquitin ligase complex-mediated CDKN1A/p21 ubiquitination and degradation. This chain is E3 ubiquitin-protein ligase TRIM39 (Trim39), found in Rattus norvegicus (Rat).